The primary structure comprises 616 residues: MHFDDLPVLPASPGVYIFRRGGTPIYIGKAVNLRSRVAQHFKAGGKSGKFTALADSLDFITTRNEVEALILEANLIKQHRPHYNVLLKDDKHYPFLKLTNEAFPMLVVTRRVLKDGASYYGPYPDASAVRRVKHLIDTMFPLRKNSGLPMQKKPRPCLNYHMGRCLGPCVDAADPQAYAQVVEDVKALLEGRAAPVIARLKADMQAAARAQDFEQAARLRDRVQAVEKLFGTEQHAYVSEETDLDFLGVAQAGEYAMVQLFRLRGGRVVGRDKRFLVGAEGGADVGEVLGAFVQDYYTQATHVPPLILLPAEFEDAPVWSAFLSERAGRRVEMRTPKRGDKAELVEMAQRNAAAGLESELALLERRGDHPGLDALREVLALPDRPWRIEGYDNSNLFGSNIVSGMVVFEGGRARRSEHRRFKVRGLDHPDDYAAMHQTITRRLTGSLADKLPLPDLILIDGGRGQVHAALDALRAADVRVPLVGLAKREERIILPGRFGAQWWLETGTEVGVGGELLLPHTHPALRVLIGVRDEVHHYAVSYHRTLRGEQMLRSVFDDLPGIGQKRRDALLEHFTSLEDLAAAPVERIAAVPGMNLRAAQSVKKFLAERTANGTPT.

Residues 11–85 (ASPGVYIFRR…IKQHRPHYNV (75 aa)) enclose the GIY-YIG domain. One can recognise a UVR domain in the interval 194 to 229 (APVIARLKADMQAAARAQDFEQAARLRDRVQAVEKL).

This sequence belongs to the UvrC family. Interacts with UvrB in an incision complex.

The protein localises to the cytoplasm. In terms of biological role, the UvrABC repair system catalyzes the recognition and processing of DNA lesions. UvrC both incises the 5' and 3' sides of the lesion. The N-terminal half is responsible for the 3' incision and the C-terminal half is responsible for the 5' incision. The chain is UvrABC system protein C from Deinococcus geothermalis (strain DSM 11300 / CIP 105573 / AG-3a).